The following is a 365-amino-acid chain: Red-sensitive opsin (365 aa).

Residues 1–51 (MASQLNEAIFAARRRNDDDDTTRSSVFTYTNSNNTRGPFEGPNYHIAPRWV) lie on the Extracellular side of the membrane. N-linked (GlcNAc...) asparagine glycosylation is present at Asn-33. A helical membrane pass occupies residues 52–76 (YNLTSIWMIFVVFASVFTNGLVIVA). The Cytoplasmic segment spans residues 77–88 (TLKFKKLRHPLN). A helical transmembrane segment spans residues 89 to 113 (WILVNMAIADLGETVIASTISVFNQ). Over 114–128 (IFGYFILGHPMCVLE) the chain is Extracellular. A disulfide bond links Cys-125 and Cys-202. Residues 129–148 (GFTVSTCGITALWSLTVIAW) form a helical membrane-spanning segment. Residues 149–167 (ERWFVVCKPFGNIKFDEKL) lie on the Cytoplasmic side of the membrane. A helical membrane pass occupies residues 168–191 (AATGIIFSWVWSAGWCAPPMFGWS). Over 192–217 (RFWPHGLKTSCGPDVFSGSSDPGVQS) the chain is Extracellular. A helical transmembrane segment spans residues 218–245 (YMLVLMITCCIIPLAIIILCYLHVWWTI). At 246 to 267 (RQVAQQQKESESTQKAEREVSR) the chain is on the cytoplasmic side. Residues 268-291 (MVVVMIVAYIFCWGPYTFFACFAA) form a helical membrane-spanning segment. Over 292–299 (FSPGYSFH) the chain is Extracellular. Residues 300–324 (PLAAALPAYFAKSATIYNPIIYVFM) form a helical membrane-spanning segment. At Lys-311 the chain carries N6-(retinylidene)lysine. The Cytoplasmic segment spans residues 325–365 (NRQFRNCIYQMFGKKVDDGSEVSSTSRTEVSSVSNSSVSPA). A disordered region spans residues 342 to 365 (DGSEVSSTSRTEVSSVSNSSVSPA). A compositionally biased stretch (low complexity) spans 345 to 365 (EVSSTSRTEVSSVSNSSVSPA).

The protein belongs to the G-protein coupled receptor 1 family. Opsin subfamily. In terms of processing, phosphorylated on some or all of the serine and threonine residues present in the C-terminal region.

The protein localises to the membrane. Visual pigments are the light-absorbing molecules that mediate vision. They consist of an apoprotein, opsin, covalently linked to cis-retinal. This chain is Red-sensitive opsin (opn1lw1), found in Xenopus laevis (African clawed frog).